A 104-amino-acid polypeptide reads, in one-letter code: Chemokine-like protein MC148 (104 aa).

As to quaternary structure, interacts with host CXCL12.

Functionally, plays a role in antagonizing the chemotaxis of multiple leukocyte subsets induced by CC and CXC chemokines. Displaces the interaction between CXCL12 and CXCR4 and thereby inactivates the antiviral activity of host CXCL12. This chain is Chemokine-like protein MC148 (MC148), found in Homo sapiens (Human).